The primary structure comprises 64 residues: MGKAKGIRILITLECTECRSNTNKRSNGVSRYTTQKNRRNNPERIELKKYCPHCNKSTIHKEIK.

The protein belongs to the bacterial ribosomal protein bL33 family.

The protein resides in the plastid. It localises to the chloroplast. The chain is Large ribosomal subunit protein bL33c (rpl33) from Trieres chinensis (Marine centric diatom).